The primary structure comprises 261 residues: tRNA U34 carboxymethyltransferase (261 aa).

Residues Lys25, Trp39, Lys44, Gly63, Val114–Glu115, Tyr135, and Arg250 each bind carboxy-S-adenosyl-L-methionine.

The protein belongs to the class I-like SAM-binding methyltransferase superfamily. CmoB family. In terms of assembly, homotetramer.

It catalyses the reaction carboxy-S-adenosyl-L-methionine + 5-hydroxyuridine(34) in tRNA = 5-carboxymethoxyuridine(34) in tRNA + S-adenosyl-L-homocysteine + H(+). Functionally, catalyzes carboxymethyl transfer from carboxy-S-adenosyl-L-methionine (Cx-SAM) to 5-hydroxyuridine (ho5U) to form 5-carboxymethoxyuridine (cmo5U) at position 34 in tRNAs. This is tRNA U34 carboxymethyltransferase from Helicobacter pylori (strain J99 / ATCC 700824) (Campylobacter pylori J99).